The sequence spans 193 residues: Resuscitation-promoting factor Rpf1 (193 aa).

An N-terminal signal peptide occupies residues 1–35; sequence MGRHSTKTSSAFTKLAASTIAFGAAATIMAPSASA.

Belongs to the transglycosylase family. Rpf subfamily.

The protein localises to the secreted. Factor that stimulates resuscitation of dormant cells. Has peptidoglycan (PG) hydrolytic activity. Active in the pM concentration range. Has little to no effect on actively-growing cells. PG fragments could either directly activate the resuscitation pathway of dormant bacteria or serve as a substrate for endogenous Rpf, resulting in low molecular weight products with resuscitation activity. In Corynebacterium glutamicum (strain ATCC 13032 / DSM 20300 / JCM 1318 / BCRC 11384 / CCUG 27702 / LMG 3730 / NBRC 12168 / NCIMB 10025 / NRRL B-2784 / 534), this protein is Resuscitation-promoting factor Rpf1 (rpf1).